The following is a 358-amino-acid chain: Stearoyl-CoA desaturase 2 (358 aa).

The Cytoplasmic portion of the chain corresponds to 1–71 (MPAHILQEIS…EGPPPKLEYV (71 aa)). The tract at residues 16–39 (TTTITAPPSGGQQNGGEKFEKSSH) is disordered. The chain crosses the membrane as a helical span at residues 72–92 (WRNIILMALLHLGALYGITLV). N74 contacts substrate. Residues 93–96 (PSCK) lie on the Lumenal side of the membrane. A helical membrane pass occupies residues 97–117 (LYTCLFAYLYYVISALGITAG). Over 118–216 (AHRLWSHRTY…EKLVMFQRRY (99 aa)) the chain is Cytoplasmic. Fe cation-binding residues include H119 and H124. Positions 119-124 (HRLWSH) match the Histidine box-1 motif. Residues N147, R154, and D155 each coordinate substrate. Positions 156, 159, and 160 each coordinate Fe cation. Residues 156-160 (HRAHH) carry the Histidine box-2 motif. Substrate contacts are provided by R187 and K188. Residues 217–236 (YKPGLLLMCFVLPTLVPWYC) traverse the membrane as a helical segment. Topologically, residues 237–240 (WGET) are lumenal. A helical membrane pass occupies residues 241–262 (FVNSLCVSTFLRYAVVLNATWL). Residue W261 participates in substrate binding. Topologically, residues 263–358 (VNSAAHLYGY…RTGDGSCKSG (96 aa)) are cytoplasmic. Positions 268, 297, 300, and 301 each coordinate Fe cation. Residues 297 to 301 (HNYHH) carry the Histidine box-3 motif.

This sequence belongs to the fatty acid desaturase type 1 family. Requires Fe(2+) as cofactor. In terms of tissue distribution, detected in brain and skin. Highly expressed in brain, and detected at low levels in heart, stomach, lung and testis. Detected both in dermis and epidermis.

It is found in the endoplasmic reticulum membrane. The protein resides in the microsome membrane. It carries out the reaction octadecanoyl-CoA + 2 Fe(II)-[cytochrome b5] + O2 + 2 H(+) = (9Z)-octadecenoyl-CoA + 2 Fe(III)-[cytochrome b5] + 2 H2O. The enzyme catalyses hexadecanoyl-CoA + 2 Fe(II)-[cytochrome b5] + O2 + 2 H(+) = (9Z)-hexadecenoyl-CoA + 2 Fe(III)-[cytochrome b5] + 2 H2O. Stearoyl-CoA desaturase that utilizes O(2) and electrons from reduced cytochrome b5 to introduce the first double bond into saturated fatty acyl-CoA substrates. Catalyzes the insertion of a cis double bond at the delta-9 position into fatty acyl-CoA substrates including palmitoyl-CoA and stearoyl-CoA. Gives rise to a mixture of 16:1 and 18:1 unsaturated fatty acids. Contributes to the biosynthesis of membrane phospholipids, cholesterol esters and triglycerides, especially during embryonic development and in neonates. Important for normal permeability barrier function of the skin in neonates. This chain is Stearoyl-CoA desaturase 2 (Scd2), found in Mus musculus (Mouse).